The sequence spans 715 residues: MFDEVKKSIQWGQETLTLETGKVARQADGSVIATLGETSVMANVTFAKEPKPGQDFFPLTVHYQEKYYAAGKIPGGFFKREARPSEKETLTARLIDRPIRPLFVPGFKHEVLVMCTVLSHDLVNDPDIVAMIAASAALTISGVPFMGPIAAARVGFADGEYVLNPEVQDMDHLRLNPEQRLDLVVAGTRDAVMMVESEAYELTEAEMLGAVKFGHEAMQPVIDLIIDLAEAAAKEPFEFASPDYSALYARVKSLGEADMRAAYAIHDKGERRDAIEVAKAKVLAGLSEEELLDPNLGSALKKLESGILRGGIIDGRPRIDGRDNKTVRPIDCEVGFLPRTHGSSLFTRGETQALVVTTLGTGDDEQIIDALHGNSRSNFLLHYNFPPYSVGEVGRVGSPGRREIGHGKLAWRALQAVLPAPTDFPYTIRVVSEITESNGSSSMASVCGGSLSMMDAGVPLKAPVAGVAMGLILEEDGRWAVLTDILGDEDHLGDMDFKVAGTENGITSLQMDIKVAGITPEIMEQALAQAKDGRLHILGEMSKALSEGRREFSAHAPRIETMTIPTDKIREVIGSGGKVIREIVETSGAKVDISDDGTIKIASANADSIKKAYDMIYSIVAEPEEGKIYVGKVVKLVDFGAFVNFFGKRDGLVHVSQIAGKRLNHPNEVLKEGQEVKVKLLGFDDRGKVRLGMKMVDQETGEEIAPEKKEETAEG.

Positions 490 and 496 each coordinate Mg(2+). Positions 557–616 (PRIETMTIPTDKIREVIGSGGKVIREIVETSGAKVDISDDGTIKIASANADSIKKAYDMI) constitute a KH domain. Positions 626–694 (GKIYVGKVVK…DRGKVRLGMK (69 aa)) constitute an S1 motif domain.

The protein belongs to the polyribonucleotide nucleotidyltransferase family. It depends on Mg(2+) as a cofactor.

Its subcellular location is the cytoplasm. The catalysed reaction is RNA(n+1) + phosphate = RNA(n) + a ribonucleoside 5'-diphosphate. Functionally, involved in mRNA degradation. Catalyzes the phosphorolysis of single-stranded polyribonucleotides processively in the 3'- to 5'-direction. The sequence is that of Polyribonucleotide nucleotidyltransferase from Paracoccus denitrificans (strain Pd 1222).